The following is an 835-amino-acid chain: Protein translocase subunit SecA (835 aa).

ATP-binding positions include Gln85, 103–107 (GEGKT), and Asp495. The disordered stretch occupies residues 806–835 (KVFLNNDSSDDESSKKRRTRKVRTSKKPWN). Residues 820 to 835 (KKRRTRKVRTSKKPWN) show a composition bias toward basic residues.

This sequence belongs to the SecA family. In terms of assembly, monomer and homodimer. Part of the essential Sec protein translocation apparatus which comprises SecA, SecYEG and auxiliary proteins SecDF. Other proteins may also be involved.

The protein resides in the cell membrane. Its subcellular location is the cytoplasm. It catalyses the reaction ATP + H2O + cellular proteinSide 1 = ADP + phosphate + cellular proteinSide 2.. Functionally, part of the Sec protein translocase complex. Interacts with the SecYEG preprotein conducting channel. Has a central role in coupling the hydrolysis of ATP to the transfer of proteins into and across the cell membrane, serving as an ATP-driven molecular motor driving the stepwise translocation of polypeptide chains across the membrane. The chain is Protein translocase subunit SecA from Onion yellows phytoplasma (strain OY-M).